The sequence spans 374 residues: Acid phosphatase-like protein XcAP-1 (374 aa).

Positions 1 to 17 (TTIILLIAFAAIQLSKA) are cleaved as a signal peptide. Valine 25 lines the serotonin pocket. Intrachain disulfides connect cysteine 144–cysteine 372, cysteine 165–cysteine 219, and cysteine 345–cysteine 349. 4 residues coordinate serotonin: aspartate 245, aspartate 249, asparagine 271, and glutamine 283.

It belongs to the histidine acid phosphatase family.

The protein localises to the secreted. Probably modulates blood feeding of fleas on vertebrate species by binding and sequestering different mediators involved in the host response. Binds biogenic amines: serotonin, adrenaline and noradrenaline. Binds leukotriene C4. Does not bind histamine, leukotriene B4, leukotriene D4, leukotriene E4, ADP, and stable analogs of thromboxane A2: U-46619 and cTXA2. The polypeptide is Acid phosphatase-like protein XcAP-1 (Xenopsylla cheopis (Oriental rat flea)).